The primary structure comprises 90 residues: Acylphosphatase (90 aa).

The 86-residue stretch at 5–90 (CVKASVKGIV…WRHIDGFEIK (86 aa)) folds into the Acylphosphatase-like domain. Residues arginine 20 and asparagine 38 contribute to the active site.

It belongs to the acylphosphatase family.

It carries out the reaction an acyl phosphate + H2O = a carboxylate + phosphate + H(+). This chain is Acylphosphatase (acyP), found in Photobacterium profundum (strain SS9).